A 341-amino-acid chain; its full sequence is Glyceraldehyde-3-phosphate dehydrogenase 2 (341 aa).

Residues 12–13 (RI), Arg78, and Thr120 each bind NAD(+). Residues 152–154 (SCT) and Thr183 contribute to the D-glyceraldehyde 3-phosphate site. Catalysis depends on Cys153, which acts as the Nucleophile. Asn184 contacts NAD(+). Residues Arg198, 211-212 (TG), and Arg234 each bind D-glyceraldehyde 3-phosphate. Asn313 provides a ligand contact to NAD(+).

The protein belongs to the glyceraldehyde-3-phosphate dehydrogenase family. In terms of assembly, homotetramer.

It localises to the cytoplasm. The enzyme catalyses D-glyceraldehyde 3-phosphate + phosphate + NAD(+) = (2R)-3-phospho-glyceroyl phosphate + NADH + H(+). It functions in the pathway carbohydrate degradation; glycolysis; pyruvate from D-glyceraldehyde 3-phosphate: step 1/5. In terms of biological role, catalyzes the oxidative phosphorylation of glyceraldehyde 3-phosphate (G3P) to 1,3-bisphosphoglycerate (BPG) using the cofactor NAD. The first reaction step involves the formation of a hemiacetal intermediate between G3P and a cysteine residue, and this hemiacetal intermediate is then oxidized to a thioester, with concomitant reduction of NAD to NADH. The reduced NADH is then exchanged with the second NAD, and the thioester is attacked by a nucleophilic inorganic phosphate to produce BPG. This Staphylococcus epidermidis (strain ATCC 35984 / DSM 28319 / BCRC 17069 / CCUG 31568 / BM 3577 / RP62A) protein is Glyceraldehyde-3-phosphate dehydrogenase 2 (gapA2).